We begin with the raw amino-acid sequence, 140 residues long: Large ribosomal subunit protein uL11 (140 aa).

Belongs to the universal ribosomal protein uL11 family. As to quaternary structure, part of the ribosomal stalk of the 50S ribosomal subunit. Interacts with L10 and the large rRNA to form the base of the stalk. L10 forms an elongated spine to which L12 dimers bind in a sequential fashion forming a multimeric L10(L12)X complex. Post-translationally, one or more lysine residues are methylated.

Its function is as follows. Forms part of the ribosomal stalk which helps the ribosome interact with GTP-bound translation factors. In Syntrophotalea carbinolica (strain DSM 2380 / NBRC 103641 / GraBd1) (Pelobacter carbinolicus), this protein is Large ribosomal subunit protein uL11.